The primary structure comprises 294 residues: Cytidine deaminase (294 aa).

2 CMP/dCMP-type deaminase domains span residues 48–168 (DEDA…FGPK) and 186–294 (LTGD…VLLG). A substrate-binding site is contributed by 89-91 (NME). A Zn(2+)-binding site is contributed by His102. Glu104 serves as the catalytic Proton donor. Zn(2+)-binding residues include Cys129 and Cys132.

It belongs to the cytidine and deoxycytidylate deaminase family. As to quaternary structure, homodimer. Zn(2+) is required as a cofactor.

The enzyme catalyses cytidine + H2O + H(+) = uridine + NH4(+). It catalyses the reaction 2'-deoxycytidine + H2O + H(+) = 2'-deoxyuridine + NH4(+). Functionally, this enzyme scavenges exogenous and endogenous cytidine and 2'-deoxycytidine for UMP synthesis. The chain is Cytidine deaminase from Salmonella schwarzengrund (strain CVM19633).